The sequence spans 106 residues: Large ribosomal subunit protein eL42 (106 aa).

4 residues coordinate Zn(2+): C12, C17, C74, and C77.

Belongs to the eukaryotic ribosomal protein eL42 family. As to quaternary structure, component of the large ribosomal subunit. Mature ribosomes consist of a small (40S) and a large (60S) subunit. The 40S subunit contains about 32 different proteins and 1 molecule of RNA (18S). The 60S subunit contains 45 different proteins and 3 molecules of RNA (25S, 5.8S and 5S). Requires Zn(2+) as cofactor.

It is found in the cytoplasm. Component of the ribosome, a large ribonucleoprotein complex responsible for the synthesis of proteins in the cell. The small ribosomal subunit (SSU) binds messenger RNAs (mRNAs) and translates the encoded message by selecting cognate aminoacyl-transfer RNA (tRNA) molecules. The large subunit (LSU) contains the ribosomal catalytic site termed the peptidyl transferase center (PTC), which catalyzes the formation of peptide bonds, thereby polymerizing the amino acids delivered by tRNAs into a polypeptide chain. The nascent polypeptides leave the ribosome through a tunnel in the LSU and interact with protein factors that function in enzymatic processing, targeting, and the membrane insertion of nascent chains at the exit of the ribosomal tunnel. The chain is Large ribosomal subunit protein eL42 (RPL44) from Candida albicans (strain SC5314 / ATCC MYA-2876) (Yeast).